The chain runs to 162 residues: Peptide methionine sulfoxide reductase MsrA (162 aa).

The active site involves Cys16.

It belongs to the MsrA Met sulfoxide reductase family.

It catalyses the reaction L-methionyl-[protein] + [thioredoxin]-disulfide + H2O = L-methionyl-(S)-S-oxide-[protein] + [thioredoxin]-dithiol. It carries out the reaction [thioredoxin]-disulfide + L-methionine + H2O = L-methionine (S)-S-oxide + [thioredoxin]-dithiol. In terms of biological role, has an important function as a repair enzyme for proteins that have been inactivated by oxidation. Catalyzes the reversible oxidation-reduction of methionine sulfoxide in proteins to methionine. The polypeptide is Peptide methionine sulfoxide reductase MsrA (Geobacter sulfurreducens (strain ATCC 51573 / DSM 12127 / PCA)).